The sequence spans 269 residues: Protein NETWORKED 3A (269 aa).

In terms of domain architecture, NAB spans 6–87 (SKWWWIGNHN…ERYDLLRPSS (82 aa)). The interval 87-113 (SVHKHGSDSESHEKSSTCDESSWSEAC) is disordered. Over residues 91 to 103 (HGSDSESHEKSST) the composition is skewed to basic and acidic residues. Positions 155–214 (NGNSEMMKIEIERLREENKVYSEMVREKDEEKREAIRQMSVAIQMLKEENSELKKRVTNT) form a coiled coil.

The protein belongs to the NET family.

The protein localises to the cytoplasm. It is found in the cytoskeleton. Its subcellular location is the nucleus membrane. Functionally, plant-specific actin binding protein. May be part of a membrane-cytoskeletal adapter complex. The polypeptide is Protein NETWORKED 3A (Arabidopsis thaliana (Mouse-ear cress)).